The following is a 528-amino-acid chain: Glutamate--cysteine ligase (528 aa).

This sequence belongs to the glutamate--cysteine ligase type 1 family. Type 1 subfamily.

It carries out the reaction L-cysteine + L-glutamate + ATP = gamma-L-glutamyl-L-cysteine + ADP + phosphate + H(+). Its pathway is sulfur metabolism; glutathione biosynthesis; glutathione from L-cysteine and L-glutamate: step 1/2. The chain is Glutamate--cysteine ligase from Janthinobacterium sp. (strain Marseille) (Minibacterium massiliensis).